Consider the following 204-residue polypeptide: Dual-action ribosomal maturation protein DarP (204 aa).

2 disordered regions span residues 1 to 31 (MPPM…SKSQ) and 182 to 204 (GGAS…DDEA). Residues 186-204 (DSDDEAADDAGDDHDDDEA) are compositionally biased toward acidic residues.

This sequence belongs to the DarP family.

It is found in the cytoplasm. Its function is as follows. Member of a network of 50S ribosomal subunit biogenesis factors which assembles along the 30S-50S interface, preventing incorrect 23S rRNA structures from forming. Promotes peptidyl transferase center (PTC) maturation. The sequence is that of Dual-action ribosomal maturation protein DarP from Burkholderia orbicola (strain MC0-3).